A 229-amino-acid chain; its full sequence is Putative N-acetylmannosamine-6-phosphate 2-epimerase (229 aa).

Belongs to the NanE family.

The catalysed reaction is an N-acyl-D-glucosamine 6-phosphate = an N-acyl-D-mannosamine 6-phosphate. It participates in amino-sugar metabolism; N-acetylneuraminate degradation; D-fructose 6-phosphate from N-acetylneuraminate: step 3/5. In terms of biological role, converts N-acetylmannosamine-6-phosphate (ManNAc-6-P) to N-acetylglucosamine-6-phosphate (GlcNAc-6-P). This Shigella flexneri serotype 5b (strain 8401) protein is Putative N-acetylmannosamine-6-phosphate 2-epimerase.